The following is a 321-amino-acid chain: Fructose-1,6-bisphosphatase class 1 (321 aa).

Mg(2+)-binding residues include Glu-93, Asp-114, Leu-116, and Asp-117. Substrate-binding positions include 117-120, Asn-205, Tyr-233, and Lys-263; that span reads DGSS. Mg(2+) is bound at residue Glu-269.

This sequence belongs to the FBPase class 1 family. Homotetramer. Mg(2+) serves as cofactor.

It localises to the cytoplasm. The catalysed reaction is beta-D-fructose 1,6-bisphosphate + H2O = beta-D-fructose 6-phosphate + phosphate. The protein operates within carbohydrate biosynthesis; gluconeogenesis. The sequence is that of Fructose-1,6-bisphosphatase class 1 from Persephonella marina (strain DSM 14350 / EX-H1).